Consider the following 147-residue polypeptide: Probable cytidine deaminase (147 aa).

Residues 4 to 130 enclose the CMP/dCMP-type deaminase domain; the sequence is EELEKCIDAA…KLLPGLFSQE (127 aa). 45–51 provides a ligand contact to substrate; that stretch reads NVENSSY. Zn(2+) is bound at residue C56. E58 acts as the Proton donor in catalysis. The Zn(2+) site is built by C90 and C93.

This sequence belongs to the cytidine and deoxycytidylate deaminase family. Zn(2+) serves as cofactor.

It catalyses the reaction cytidine + H2O + H(+) = uridine + NH4(+). The catalysed reaction is 2'-deoxycytidine + H2O + H(+) = 2'-deoxyuridine + NH4(+). Its function is as follows. This enzyme scavenges exogenous and endogenous cytidine and 2'-deoxycytidine for UMP synthesis. The sequence is that of Probable cytidine deaminase (cda) from Dictyostelium discoideum (Social amoeba).